The sequence spans 292 residues: Aquaporin-3 (292 aa).

The Cytoplasmic portion of the chain corresponds to 1 to 24 (MGRQKELVSRCGEMLHIRYRLLRQ). A helical membrane pass occupies residues 25 to 42 (ALAECLGTLILVMFGCGS). Residues 43 to 56 (VAQVVLSRGTHGGF) are Extracellular-facing. Residues 57 to 74 (LTINLAFGFAVTLGILIA) form a helical membrane-spanning segment. Over 75-78 (GQVS) the chain is Cytoplasmic. Residues 79–92 (GAHLNPAVTFAMCF) constitute an intramembrane region (discontinuously helical). The NPA 1 motif lies at 83 to 85 (NPA). The Cytoplasmic segment spans residues 93–100 (LAREPWIK). The chain crosses the membrane as a helical span at residues 101–121 (LPIYTLAQTLGAFLGAGIVFG). Residues 122–159 (LYYDAIWHFADNQLFVSGPNGTAGIFATYPSGHLDMIN) are Extracellular-facing. N-linked (GlcNAc...) asparagine glycosylation occurs at Asn-141. Residues 160 to 177 (GFFDQFIGTASLIVCVLA) traverse the membrane as a helical segment. Residues 178–189 (IVDPYNNPVPRG) are Cytoplasmic-facing. Residues 190-206 (LEAFTVGLVVLVIGTSM) form a helical membrane-spanning segment. Over 207–210 (GFNS) the chain is Extracellular. Residues 211–224 (GYAVNPARDFGPRL) constitute an intramembrane region (discontinuously helical). The short motif at 215 to 217 (NPA) is the NPA 2 element. Residues 225–242 (FTALAGWGSAVFTTGQHW) lie on the Extracellular side of the membrane. A helical transmembrane segment spans residues 243–264 (WWVPIVSPLLGSIAGVFVYQLM). At 265–292 (IGCHLEQPPPSNEEENVKLAHVKHKEQI) the chain is on the cytoplasmic side.

Belongs to the MIP/aquaporin (TC 1.A.8) family. As to quaternary structure, homotetramer; each monomer provides an independent glycerol/water pore. Could also exist in other oligomeric states. Widely expressed in epithelial cells of kidney (collecting ducts) and airways, in keratinocytes, immature dendritic cells and erythrocytes. Isoform 2 is not detectable in erythrocytes at the protein level.

The protein localises to the cell membrane. Its subcellular location is the basolateral cell membrane. It carries out the reaction glycerol(in) = glycerol(out). It catalyses the reaction H2O(in) = H2O(out). The enzyme catalyses H2O2(out) = H2O2(in). The catalysed reaction is urea(in) = urea(out). Glycerol transport is regulated by pH, with the porin being permeable to glycerol at pH 7.4 but not at pH 5.5. Water permeability, however, is not influenced by pH. Aquaglyceroporins form homotetrameric transmembrane channels, with each monomer independently mediating glycerol and water transport across the plasma membrane along their osmotic gradient. Could also be permeable to urea. Also participates in cell permeability to H2O2 and H2O2-mediated signaling. In skin, transports glycerol to the epidermis and stratum corneum, where it maintains hydration, elasticity, and supports lipid biosynthesis for barrier repair. In kidney, contributes to the reabsorption of water, helping the body maintain proper fluid balance. The chain is Aquaporin-3 from Homo sapiens (Human).